We begin with the raw amino-acid sequence, 26 residues long: uncharacterized protein (26 aa).

The protein localises to the plastid. Its subcellular location is the chloroplast. This is an uncharacterized protein from Trieres chinensis (Marine centric diatom).